A 270-amino-acid chain; its full sequence is Acyl-[acyl-carrier-protein]--UDP-N-acetylglucosamine O-acyltransferase (270 aa).

This sequence belongs to the transferase hexapeptide repeat family. LpxA subfamily. As to quaternary structure, homotrimer.

The protein localises to the cytoplasm. It carries out the reaction a (3R)-hydroxyacyl-[ACP] + UDP-N-acetyl-alpha-D-glucosamine = a UDP-3-O-[(3R)-3-hydroxyacyl]-N-acetyl-alpha-D-glucosamine + holo-[ACP]. The protein operates within glycolipid biosynthesis; lipid IV(A) biosynthesis; lipid IV(A) from (3R)-3-hydroxytetradecanoyl-[acyl-carrier-protein] and UDP-N-acetyl-alpha-D-glucosamine: step 1/6. Its function is as follows. Involved in the biosynthesis of lipid A, a phosphorylated glycolipid that anchors the lipopolysaccharide to the outer membrane of the cell. The chain is Acyl-[acyl-carrier-protein]--UDP-N-acetylglucosamine O-acyltransferase from Helicobacter pylori (strain Shi470).